A 429-amino-acid polypeptide reads, in one-letter code: UDP-glucuronate 4-epimerase 1 (429 aa).

A run of 2 helical transmembrane segments spans residues 36 to 56 (FLWALFLIALTASYLSFQSFV) and 87 to 107 (GISVLVTGATGFVGSHVSLAL). Residue 89–120 (SVLVTGATGFVGSHVSLALRKRGDGVVGLDNF) coordinates NAD(+). Tyrosine 239 acts as the Proton acceptor in catalysis.

This sequence belongs to the NAD(P)-dependent epimerase/dehydratase family. In terms of assembly, homodimer. As to expression, in root stele, leaves, siliques, flowers, pollen and stems.

The protein resides in the golgi apparatus. The protein localises to the golgi stack membrane. The catalysed reaction is UDP-alpha-D-glucuronate = UDP-alpha-D-galacturonate. Its activity is regulated as follows. Inhibited by UDP-Xylose. Functionally, UDP-D-glucuronate 4-epimerase involved in the synthesis of the negatively charged monosaccharide that forms the backbone of pectic cell wall components. The sequence is that of UDP-glucuronate 4-epimerase 1 (GAE1) from Arabidopsis thaliana (Mouse-ear cress).